We begin with the raw amino-acid sequence, 302 residues long: ATP synthase gamma chain (302 aa).

The protein belongs to the ATPase gamma chain family. F-type ATPases have 2 components, CF(1) - the catalytic core - and CF(0) - the membrane proton channel. CF(1) has five subunits: alpha(3), beta(3), gamma(1), delta(1), epsilon(1). CF(0) has three main subunits: a, b and c.

It localises to the cell membrane. Its function is as follows. Produces ATP from ADP in the presence of a proton gradient across the membrane. The gamma chain is believed to be important in regulating ATPase activity and the flow of protons through the CF(0) complex. The protein is ATP synthase gamma chain of Kineococcus radiotolerans (strain ATCC BAA-149 / DSM 14245 / SRS30216).